The sequence spans 142 residues: Large ribosomal subunit protein uL13 (142 aa).

It belongs to the universal ribosomal protein uL13 family. As to quaternary structure, part of the 50S ribosomal subunit.

This protein is one of the early assembly proteins of the 50S ribosomal subunit, although it is not seen to bind rRNA by itself. It is important during the early stages of 50S assembly. The sequence is that of Large ribosomal subunit protein uL13 from Pseudomonas fluorescens (strain ATCC BAA-477 / NRRL B-23932 / Pf-5).